The chain runs to 114 residues: Ribonuclease P protein component (114 aa).

Belongs to the RnpA family. Consists of a catalytic RNA component (M1 or rnpB) and a protein subunit.

The catalysed reaction is Endonucleolytic cleavage of RNA, removing 5'-extranucleotides from tRNA precursor.. In terms of biological role, RNaseP catalyzes the removal of the 5'-leader sequence from pre-tRNA to produce the mature 5'-terminus. It can also cleave other RNA substrates such as 4.5S RNA. The protein component plays an auxiliary but essential role in vivo by binding to the 5'-leader sequence and broadening the substrate specificity of the ribozyme. This Borrelia turicatae (strain 91E135) protein is Ribonuclease P protein component.